The primary structure comprises 150 residues: UPF0098 protein TC_0109 (150 aa).

The protein belongs to the UPF0098 family.

This Chlamydia muridarum (strain MoPn / Nigg) protein is UPF0098 protein TC_0109.